A 68-amino-acid chain; its full sequence is MARLFKVTACVPSQTRIRTQRELQNTYFTKLVPFENWFREQQRIMKMGGKIVKVELATGKQGTNTGLL.

Positions 2 to 57 constitute a CpcD-like domain; it reads ARLFKVTACVPSQTRIRTQRELQNTYFTKLVPFENWFREQQRIMKMGGKIVKVELA.

This sequence belongs to the phycobilisome linker protein family.

It localises to the cellular thylakoid membrane. Functionally, rod linker protein, associated with allophycocyanin. Linker polypeptides determine the state of aggregation and the location of the disk-shaped phycobiliprotein units within the phycobilisome and modulate their spectroscopic properties in order to mediate a directed and optimal energy transfer. The chain is Phycobilisome 7.8 kDa linker polypeptide, allophycocyanin-associated, core (apcC) from Microchaete diplosiphon (Fremyella diplosiphon).